The primary structure comprises 400 residues: Chalcone synthase 7 (400 aa).

Residue cysteine 168 is part of the active site.

Belongs to the thiolase-like superfamily. Chalcone/stilbene synthases family.

The enzyme catalyses (E)-4-coumaroyl-CoA + 3 malonyl-CoA + 3 H(+) = 2',4,4',6'-tetrahydroxychalcone + 3 CO2 + 4 CoA. Its pathway is secondary metabolite biosynthesis; flavonoid biosynthesis. Its function is as follows. The primary product of this enzyme is 4,2',4',6'-tetrahydroxychalcone (also termed naringenin-chalcone or chalcone) which can under specific conditions spontaneously isomerize into naringenin. This Sorghum bicolor (Sorghum) protein is Chalcone synthase 7 (CHS7).